A 269-amino-acid chain; its full sequence is Formamidopyrimidine-DNA glycosylase (269 aa).

Residue Pro2 is the Schiff-base intermediate with DNA of the active site. Glu3 functions as the Proton donor in the catalytic mechanism. The Proton donor; for beta-elimination activity role is filled by Lys57. Residues His90, Arg109, and Lys150 each contribute to the DNA site. The FPG-type zinc-finger motif lies at 235-269 (QVYGRHGEPCYTCGEFIQIAKYGQRSSFFCPSCQN). The Proton donor; for delta-elimination activity role is filled by Arg259.

Belongs to the FPG family. Monomer. It depends on Zn(2+) as a cofactor.

It catalyses the reaction Hydrolysis of DNA containing ring-opened 7-methylguanine residues, releasing 2,6-diamino-4-hydroxy-5-(N-methyl)formamidopyrimidine.. The enzyme catalyses 2'-deoxyribonucleotide-(2'-deoxyribose 5'-phosphate)-2'-deoxyribonucleotide-DNA = a 3'-end 2'-deoxyribonucleotide-(2,3-dehydro-2,3-deoxyribose 5'-phosphate)-DNA + a 5'-end 5'-phospho-2'-deoxyribonucleoside-DNA + H(+). Functionally, involved in base excision repair of DNA damaged by oxidation or by mutagenic agents. Acts as a DNA glycosylase that recognizes and removes damaged bases. Has a preference for oxidized purines, such as 7,8-dihydro-8-oxoguanine (8-oxoG). Has AP (apurinic/apyrimidinic) lyase activity and introduces nicks in the DNA strand. Cleaves the DNA backbone by beta-delta elimination to generate a single-strand break at the site of the removed base with both 3'- and 5'-phosphates. The protein is Formamidopyrimidine-DNA glycosylase of Baumannia cicadellinicola subsp. Homalodisca coagulata.